A 187-amino-acid chain; its full sequence is Threonylcarbamoyl-AMP synthase (187 aa).

The YrdC-like domain maps to 4 to 187; sequence TLDLDRAVAA…DARSGQILRD (184 aa).

Belongs to the SUA5 family. TsaC subfamily.

Its subcellular location is the cytoplasm. The catalysed reaction is L-threonine + hydrogencarbonate + ATP = L-threonylcarbamoyladenylate + diphosphate + H2O. Its function is as follows. Required for the formation of a threonylcarbamoyl group on adenosine at position 37 (t(6)A37) in tRNAs that read codons beginning with adenine. Catalyzes the conversion of L-threonine, HCO(3)(-)/CO(2) and ATP to give threonylcarbamoyl-AMP (TC-AMP) as the acyladenylate intermediate, with the release of diphosphate. This Xanthomonas axonopodis pv. citri (strain 306) protein is Threonylcarbamoyl-AMP synthase.